A 1087-amino-acid chain; its full sequence is Apoptosis-stimulating of p53 protein 1 (1087 aa).

Residues 82-122 are disordered; sequence HEDSPTESSEQGARQTQEQRTQRSVVNVPGEKRTENGVGNP. Positions 87–106 are enriched in polar residues; the sequence is TESSEQGARQTQEQRTQRSV. 2 positions are modified to phosphoserine: Ser332 and Ser335. Disordered stretches follow at residues 374–415, 442–721, and 734–878; these read SSAA…GMEG, IGKG…PNIQ, and GMEG…TGHG. A compositionally biased stretch (polar residues) spans 393–405; that stretch reads KQNSASVKSTQMT. A compositionally biased stretch (pro residues) spans 445-458; sequence GPPPIPGVGKPLPP. Positions 459–476 are enriched in low complexity; it reads SYGTYPSSGPLGPGSTSS. Polar residues predominate over residues 506–520; that stretch reads NAPQPGSSQQIQQRI. A compositionally biased stretch (pro residues) spans 523–536; the sequence is PPSPTYPPAGPPAF. The residue at position 552 (Arg552) is an Asymmetric dimethylarginine. The segment covering 570–589 has biased composition (polar residues); it reads QTVNSSSIYSMYLQQATPPK. The segment covering 610 to 625 has biased composition (low complexity); it reads PVLPSGSASPSPLPFL. Residues Ser679 and Ser708 each carry the phosphoserine modification. Polar residues predominate over residues 805-831; sequence PQTTHQTAEPTEDNNNNVAPVPSTEQI. 2 ANK repeats span residues 917–949 and 950–982; these read EGIT…AADS and DGWT…ASTI. Residues 1016 to 1078 enclose the SH3 domain; sequence MNKGTVYALW…PKNLLGLYPR (63 aa).

It belongs to the ASPP family. Interacts with P53/TP53; the interaction promotes pro-apoptotic activity.

The protein localises to the cytoplasm. The protein resides in the nucleus. Regulator that plays a central role in regulation of apoptosis via its interaction with p53/TP53. Regulates TP53 by enhancing the DNA binding and transactivation function of TP53 on the promoters of proapoptotic genes in vivo. The chain is Apoptosis-stimulating of p53 protein 1 (Ppp1r13b) from Mus musculus (Mouse).